Reading from the N-terminus, the 954-residue chain is Bifunctional glutamine synthetase adenylyltransferase/adenylyl-removing enzyme (954 aa).

Positions 1 to 452 are adenylyl removase; it reads MAVQKDSNKS…HFKATVGGEE (452 aa). Positions 458-954 are adenylyl transferase; sequence EHWTAQLWNV…ILAIYQAILE (497 aa).

The protein belongs to the GlnE family. The cofactor is Mg(2+).

It catalyses the reaction [glutamine synthetase]-O(4)-(5'-adenylyl)-L-tyrosine + phosphate = [glutamine synthetase]-L-tyrosine + ADP. The catalysed reaction is [glutamine synthetase]-L-tyrosine + ATP = [glutamine synthetase]-O(4)-(5'-adenylyl)-L-tyrosine + diphosphate. Functionally, involved in the regulation of glutamine synthetase GlnA, a key enzyme in the process to assimilate ammonia. When cellular nitrogen levels are high, the C-terminal adenylyl transferase (AT) inactivates GlnA by covalent transfer of an adenylyl group from ATP to specific tyrosine residue of GlnA, thus reducing its activity. Conversely, when nitrogen levels are low, the N-terminal adenylyl removase (AR) activates GlnA by removing the adenylyl group by phosphorolysis, increasing its activity. The regulatory region of GlnE binds the signal transduction protein PII (GlnB) which indicates the nitrogen status of the cell. The chain is Bifunctional glutamine synthetase adenylyltransferase/adenylyl-removing enzyme from Shewanella oneidensis (strain ATCC 700550 / JCM 31522 / CIP 106686 / LMG 19005 / NCIMB 14063 / MR-1).